A 163-amino-acid chain; its full sequence is Nucleotide-binding protein cbdbA1256 (163 aa).

It belongs to the YajQ family.

Its function is as follows. Nucleotide-binding protein. The polypeptide is Nucleotide-binding protein cbdbA1256 (Dehalococcoides mccartyi (strain CBDB1)).